Consider the following 82-residue polypeptide: MVLVQDLLHPSPATEAKQHKLKTLVQQPRSFFMDVKCQGCLNITTVFSHAQTAVTCDSCSTVLCTPTGGKAKLTEGCSFRRK.

Residues cysteine 37, cysteine 40, cysteine 56, and cysteine 59 each contribute to the Zn(2+) site.

It belongs to the eukaryotic ribosomal protein eS27 family. As to quaternary structure, component of the small ribosomal subunit. Mature ribosomes consist of a small (40S) and a large (60S) subunit. The 40S subunit contains about 32 different proteins and 1 molecule of RNA (18S). The 60S subunit contains 45 different proteins and 3 molecules of RNA (25S, 5.8S and 5S). The cofactor is Zn(2+).

It is found in the cytoplasm. In terms of biological role, component of the ribosome, a large ribonucleoprotein complex responsible for the synthesis of proteins in the cell. The small ribosomal subunit (SSU) binds messenger RNAs (mRNAs) and translates the encoded message by selecting cognate aminoacyl-transfer RNA (tRNA) molecules. The large subunit (LSU) contains the ribosomal catalytic site termed the peptidyl transferase center (PTC), which catalyzes the formation of peptide bonds, thereby polymerizing the amino acids delivered by tRNAs into a polypeptide chain. The nascent polypeptides leave the ribosome through a tunnel in the LSU and interact with protein factors that function in enzymatic processing, targeting, and the membrane insertion of nascent chains at the exit of the ribosomal tunnel. In Candida albicans (strain SC5314 / ATCC MYA-2876) (Yeast), this protein is Small ribosomal subunit protein eS27 (RPS27).